We begin with the raw amino-acid sequence, 247 residues long: Coproheme decarboxylase (247 aa).

Residues arginine 129, 143–147, histidine 170, glutamine 183, and serine 221 contribute to the Fe-coproporphyrin III site; that span reads YPMDK. Tyrosine 143 is an active-site residue.

Belongs to the ChdC family. Type 1 subfamily. Fe-coproporphyrin III serves as cofactor.

It catalyses the reaction Fe-coproporphyrin III + 2 H2O2 + 2 H(+) = heme b + 2 CO2 + 4 H2O. The catalysed reaction is Fe-coproporphyrin III + H2O2 + H(+) = harderoheme III + CO2 + 2 H2O. It carries out the reaction harderoheme III + H2O2 + H(+) = heme b + CO2 + 2 H2O. It functions in the pathway porphyrin-containing compound metabolism; protoheme biosynthesis. Involved in coproporphyrin-dependent heme b biosynthesis. Catalyzes the decarboxylation of Fe-coproporphyrin III (coproheme) to heme b (protoheme IX), the last step of the pathway. The reaction occurs in a stepwise manner with a three-propionate intermediate. This Bacillus mycoides (strain KBAB4) (Bacillus weihenstephanensis) protein is Coproheme decarboxylase.